The sequence spans 273 residues: Bifunctional protein FolD (273 aa).

Residues 155–157, Ser180, and Thr221 contribute to the NADP(+) site; that span reads GRS.

Belongs to the tetrahydrofolate dehydrogenase/cyclohydrolase family. As to quaternary structure, homodimer.

The catalysed reaction is (6R)-5,10-methylene-5,6,7,8-tetrahydrofolate + NADP(+) = (6R)-5,10-methenyltetrahydrofolate + NADPH. The enzyme catalyses (6R)-5,10-methenyltetrahydrofolate + H2O = (6R)-10-formyltetrahydrofolate + H(+). Its pathway is one-carbon metabolism; tetrahydrofolate interconversion. Its function is as follows. Catalyzes the oxidation of 5,10-methylenetetrahydrofolate to 5,10-methenyltetrahydrofolate and then the hydrolysis of 5,10-methenyltetrahydrofolate to 10-formyltetrahydrofolate. This Coprothermobacter proteolyticus (strain ATCC 35245 / DSM 5265 / OCM 4 / BT) protein is Bifunctional protein FolD.